Here is a 231-residue protein sequence, read N- to C-terminus: Large ribosomal subunit protein uL1 (231 aa).

The protein belongs to the universal ribosomal protein uL1 family. In terms of assembly, part of the 50S ribosomal subunit.

Binds directly to 23S rRNA. The L1 stalk is quite mobile in the ribosome, and is involved in E site tRNA release. Its function is as follows. Protein L1 is also a translational repressor protein, it controls the translation of the L11 operon by binding to its mRNA. This chain is Large ribosomal subunit protein uL1, found in Caldanaerobacter subterraneus subsp. tengcongensis (strain DSM 15242 / JCM 11007 / NBRC 100824 / MB4) (Thermoanaerobacter tengcongensis).